The sequence spans 202 residues: Small ribosomal subunit protein uS3 (202 aa).

Residues L18–P87 form the KH type-2 domain.

This sequence belongs to the universal ribosomal protein uS3 family. Part of the 30S ribosomal subunit.

Binds the lower part of the 30S subunit head. The chain is Small ribosomal subunit protein uS3 from Thermofilum pendens (strain DSM 2475 / Hrk 5).